Here is a 198-residue protein sequence, read N- to C-terminus: Outer-membrane lipoprotein carrier protein (198 aa).

The N-terminal stretch at 1-16 (MKKWLVVFFLSASALA) is a signal peptide.

This sequence belongs to the LolA family. Monomer.

It is found in the periplasm. In terms of biological role, participates in the translocation of lipoproteins from the inner membrane to the outer membrane. Only forms a complex with a lipoprotein if the residue after the N-terminal Cys is not an aspartate (The Asp acts as a targeting signal to indicate that the lipoprotein should stay in the inner membrane). This Vibrio vulnificus (strain YJ016) protein is Outer-membrane lipoprotein carrier protein.